The sequence spans 221 residues: uncharacterized protein (221 aa).

It localises to the mitochondrion. This is an uncharacterized protein from Paramecium tetraurelia.